The chain runs to 412 residues: AT-rich interactive domain-containing protein 3C (412 aa).

Positions 1–23 (MEALQKQQAARLAQGVGPLAPAC) are enriched in low complexity. The interval 1–96 (MEALQKQQAA…SSQPPGLHPH (96 aa)) is disordered. The span at 50–73 (AEEEEDAEEDEEKREEAGAEEEAA) shows a compositional bias: acidic residues. Over residues 78-87 (PGAQGPSSPS) the composition is skewed to low complexity. In terms of domain architecture, ARID spans 113–205 (DPKRKEFLDD…YLYPYECETR (93 aa)). 2 disordered regions span residues 232–278 (TPLF…AHAC) and 388–412 (PVPA…SILP). The span at 259–272 (TQSSPGPAQGSTSG) shows a compositional bias: polar residues. An REKLES domain is found at 304–389 (LALGPTREKL…GVLFARRQPV (86 aa)).

In terms of assembly, interacts (via REKLES DOMAIN) with NPM1; the interaction mediates ARID3C nuclear shuttling.

The protein localises to the nucleus. Functionally, transcription factor involved in monocyte-to-macrophage differentiation. Forms a complex with NPM1 to translocate to the nucleus, acting as a transcription factor that promotes the expression of the genes involved in macrophage differentiation, such as STAT3, STAT1 and JUNB. This is AT-rich interactive domain-containing protein 3C from Homo sapiens (Human).